A 186-amino-acid chain; its full sequence is MRAIMVGPPGSGKGTQCGLIQSRLGISVIATGDVFRERMKTDMALRDIVSSGGYVSDSTTNRIVEDCLDKEDVSSGFVLDGYPRTLQQLDFLEGFLKRRALTLDAVFSLEVATDLLIERLRARSKESGRTDDRDSVIARRLEIYTEMTLPIIDACEEKGLLHRIDASKGIEEVFQSIKDVFDRVTI.

Gly10–Thr15 contacts ATP. Residues Ala30–Val55 are NMP. AMP contacts are provided by residues Thr31, Arg36, Gly53 to Val55, Gly81 to Arg84, and Gln88. Residues Ala122–Asp132 are LID. ATP is bound at residue Arg123. Arg129 and Arg140 together coordinate AMP. An ATP-binding site is contributed by Lys168.

It belongs to the adenylate kinase family. As to quaternary structure, monomer.

The protein localises to the cytoplasm. The enzyme catalyses AMP + ATP = 2 ADP. The protein operates within purine metabolism; AMP biosynthesis via salvage pathway; AMP from ADP: step 1/1. Its function is as follows. Catalyzes the reversible transfer of the terminal phosphate group between ATP and AMP. Plays an important role in cellular energy homeostasis and in adenine nucleotide metabolism. The chain is Adenylate kinase from Tropheryma whipplei (strain TW08/27) (Whipple's bacillus).